A 385-amino-acid polypeptide reads, in one-letter code: Probable tRNA sulfurtransferase (385 aa).

The region spanning 57–160 (DGVIERVKKV…RGNAYVFTDK (104 aa)) is the THUMP domain. ATP is bound by residues 180–181 (ML), 205–206 (YY), arginine 262, glycine 284, and glutamine 293.

Belongs to the ThiI family.

The protein resides in the cytoplasm. It carries out the reaction [ThiI sulfur-carrier protein]-S-sulfanyl-L-cysteine + a uridine in tRNA + 2 reduced [2Fe-2S]-[ferredoxin] + ATP + H(+) = [ThiI sulfur-carrier protein]-L-cysteine + a 4-thiouridine in tRNA + 2 oxidized [2Fe-2S]-[ferredoxin] + AMP + diphosphate. The enzyme catalyses [ThiS sulfur-carrier protein]-C-terminal Gly-Gly-AMP + S-sulfanyl-L-cysteinyl-[cysteine desulfurase] + AH2 = [ThiS sulfur-carrier protein]-C-terminal-Gly-aminoethanethioate + L-cysteinyl-[cysteine desulfurase] + A + AMP + 2 H(+). Its pathway is cofactor biosynthesis; thiamine diphosphate biosynthesis. Functionally, catalyzes the ATP-dependent transfer of a sulfur to tRNA to produce 4-thiouridine in position 8 of tRNAs, which functions as a near-UV photosensor. Also catalyzes the transfer of sulfur to the sulfur carrier protein ThiS, forming ThiS-thiocarboxylate. This is a step in the synthesis of thiazole, in the thiamine biosynthesis pathway. The sulfur is donated as persulfide by IscS. This Clostridium perfringens (strain ATCC 13124 / DSM 756 / JCM 1290 / NCIMB 6125 / NCTC 8237 / Type A) protein is Probable tRNA sulfurtransferase.